Here is a 206-residue protein sequence, read N- to C-terminus: Small ribosomal subunit protein uS4 (206 aa).

Residues 18–46 (NIWGRPKSPVNRREYGPGQHGQRRKQKMS) are disordered. Positions 94–154 (RRLDAVVYRA…EKSRQMAALL (61 aa)) constitute an S4 RNA-binding domain.

It belongs to the universal ribosomal protein uS4 family. As to quaternary structure, part of the 30S ribosomal subunit. Contacts protein S5. The interaction surface between S4 and S5 is involved in control of translational fidelity.

In terms of biological role, one of the primary rRNA binding proteins, it binds directly to 16S rRNA where it nucleates assembly of the body of the 30S subunit. Its function is as follows. With S5 and S12 plays an important role in translational accuracy. The polypeptide is Small ribosomal subunit protein uS4 (Dinoroseobacter shibae (strain DSM 16493 / NCIMB 14021 / DFL 12)).